Here is a 274-residue protein sequence, read N- to C-terminus: 16S rRNA (guanine(1405)-N(7))-methyltransferase (274 aa).

S-adenosyl-L-methionine contacts are provided by residues 102–108, A133, D156, 182–183, L198, and Q207; these read HISTRER and DL.

The protein belongs to the methyltransferase superfamily. Aminoglycoside resistance family.

It carries out the reaction guanosine(1405) in 16S rRNA + S-adenosyl-L-methionine = N(7)-methylguanosine(1405) in 16S rRNA + S-adenosyl-L-homocysteine. Its function is as follows. Specifically methylates the N(7) position of guanine 1405 in 16S rRNA. Confers resistance to various aminoglycosides, including gentamicin, kanamycin and sisomicin. The sequence is that of 16S rRNA (guanine(1405)-N(7))-methyltransferase (sgm) from Micromonospora zionensis.